Consider the following 141-residue polypeptide: Large ribosomal subunit protein uL22c (141 aa).

The protein belongs to the universal ribosomal protein uL22 family. Part of the 50S ribosomal subunit.

The protein resides in the plastid. It is found in the chloroplast. Its function is as follows. This protein binds specifically to 23S rRNA. Functionally, the globular domain of the protein is located near the polypeptide exit tunnel on the outside of the subunit, while an extended beta-hairpin is found that lines the wall of the exit tunnel in the center of the 70S ribosome. In Chloranthus spicatus (Chulantree), this protein is Large ribosomal subunit protein uL22c (rpl22).